A 370-amino-acid polypeptide reads, in one-letter code: MTKQSVVVPEVAVPMPPNSAPLLPYPPPRAAPGVAVRKKYLQAQLDLGAGLPLINGWVESMRASSPTHAKAAAALAAAGAVDDERAAWMVRHPSALSKFEQIVAASKGKKIVMFLDYDGTLSPIVDDPDSAFMSDTMRRAVRSVAKHFPTAIVSGRCRDKVFEFVKLAELYYAGSHGMDIKGPAKASRHNKAKAKGVLFQPASEFLPMIEQVHDSLIERTKCIPGAKVENNKFCVSVHFRCVDEKSWSTLADIVKAELKDYPKLKLTQGRMVFEIRPTIKWDKGKALEFLLESLGFADCTNVLPVYIGDDRTDEDAFKVLRKRGQGIGILVSKYPKDTNASYSLQEPAEVMEFLLRLVEWERLSRARPKW.

This sequence belongs to the trehalose phosphatase family. A divalent metal cation serves as cofactor.

The catalysed reaction is alpha,alpha-trehalose 6-phosphate + H2O = alpha,alpha-trehalose + phosphate. Its pathway is glycan biosynthesis; trehalose biosynthesis. Removes the phosphate from trehalose 6-phosphate to produce free trehalose. Trehalose accumulation in plant may improve abiotic stress tolerance. The chain is Probable trehalose-phosphate phosphatase 6 (TPP6) from Oryza sativa subsp. japonica (Rice).